Here is a 194-residue protein sequence, read N- to C-terminus: Orotate phosphoribosyltransferase (194 aa).

116-124 (EDIVTTGLS) lines the 5-phospho-alpha-D-ribose 1-diphosphate pocket. Positions 120 and 148 each coordinate orotate.

The protein belongs to the purine/pyrimidine phosphoribosyltransferase family. PyrE subfamily. As to quaternary structure, homodimer. Requires Mg(2+) as cofactor.

It carries out the reaction orotidine 5'-phosphate + diphosphate = orotate + 5-phospho-alpha-D-ribose 1-diphosphate. It functions in the pathway pyrimidine metabolism; UMP biosynthesis via de novo pathway; UMP from orotate: step 1/2. Functionally, catalyzes the transfer of a ribosyl phosphate group from 5-phosphoribose 1-diphosphate to orotate, leading to the formation of orotidine monophosphate (OMP). This chain is Orotate phosphoribosyltransferase, found in Phenylobacterium zucineum (strain HLK1).